A 415-amino-acid polypeptide reads, in one-letter code: Histidine--tRNA ligase (415 aa).

This sequence belongs to the class-II aminoacyl-tRNA synthetase family. In terms of assembly, homodimer.

The protein resides in the cytoplasm. It carries out the reaction tRNA(His) + L-histidine + ATP = L-histidyl-tRNA(His) + AMP + diphosphate + H(+). This is Histidine--tRNA ligase from Clostridium botulinum (strain ATCC 19397 / Type A).